Here is a 386-residue protein sequence, read N- to C-terminus: Putative membrane-bound transacylase BcsY (386 aa).

10 consecutive transmembrane segments (helical) span residues 37 to 57 (LAIA…FIGV), 91 to 111 (LLPA…WWVL), 118 to 138 (IALN…SGHV), 156 to 176 (LSLE…LPLT), 181 to 201 (LVLS…WHTG), 237 to 257 (AVYA…PLSY), 258 to 278 (ACPS…IMLP), 290 to 310 (LSPL…GIVV), 322 to 342 (AMMA…YVLV), and 362 to 382 (AALL…ISHV).

This sequence belongs to the acyltransferase 3 family.

The protein resides in the cell inner membrane. Its pathway is glycan metabolism; bacterial cellulose biosynthesis. Functionally, may acylate a glucose moiety into cellulose fibrils, in cooperation with BcsABII and BcsCII. The chain is Putative membrane-bound transacylase BcsY (bcsY) from Komagataeibacter xylinus (Gluconacetobacter xylinus).